The following is a 415-amino-acid chain: Small ribosomal subunit protein uS5m (415 aa).

The tract at residues 1 to 31 (MRRSGPELWKTLTSVSKSGQKKGRRNTRQPV) is disordered. The S5 DRBM domain occupies 131–197 (FETYCLEVKR…GMASRKIFHV (67 aa)). The interval 396–415 (GVEPMPLGIGLSHVVPKKDD) is disordered.

Belongs to the universal ribosomal protein uS5 family. As to quaternary structure, component of the mitochondrial ribosome small subunit (28S) which comprises a 12S rRNA and about 30 distinct proteins.

The protein resides in the mitochondrion. The chain is Small ribosomal subunit protein uS5m (mrps-5) from Caenorhabditis briggsae.